The sequence spans 150 residues: Flagellar assembly factor FliW (150 aa).

This sequence belongs to the FliW family. Interacts with translational regulator CsrA and flagellin(s).

It is found in the cytoplasm. Functionally, acts as an anti-CsrA protein, binds CsrA and prevents it from repressing translation of its target genes, one of which is flagellin. Binds to flagellin and participates in the assembly of the flagellum. The chain is Flagellar assembly factor FliW from Leptospira borgpetersenii serovar Hardjo-bovis (strain L550).